The chain runs to 526 residues: Protein ERGIC-53-like (526 aa).

Residues 1–25 (MPAVSGPGPLFCLLLLLLDPHSPET) form the signal peptide. The Lumenal portion of the chain corresponds to 26–462 (GCPPLRRFEY…QPPRASSCLQ (437 aa)). One can recognise an L-type lectin-like domain in the interval 31-252 (RRFEYKLSFK…DVLSFLTFSL (222 aa)). Residue asparagine 75 is glycosylated (N-linked (GlcNAc...) asparagine). Residues cysteine 176 and cysteine 215 are joined by a disulfide bond. A helical transmembrane segment spans residues 463–483 (PGIFLFYLLIQTVGFFGYVHF). The Cytoplasmic portion of the chain corresponds to 484–526 (RQELNKSLQECLSTGSLPLGPAPHTPRALGILRRQPLPASMPA).

As to expression, highly expressed in normal and neoplastic prostate. Also expressed in cardiac atrium, salivary gland, spleen and selective cells in the CNS.

The protein localises to the endoplasmic reticulum-Golgi intermediate compartment membrane. The chain is Protein ERGIC-53-like (LMAN1L) from Homo sapiens (Human).